The primary structure comprises 630 residues: tRNA uridine 5-carboxymethylaminomethyl modification enzyme MnmG (630 aa).

Position 13–18 (G13–G18) interacts with FAD. G273–F287 is an NAD(+) binding site.

This sequence belongs to the MnmG family. Homodimer. Heterotetramer of two MnmE and two MnmG subunits. FAD serves as cofactor.

The protein localises to the cytoplasm. Its function is as follows. NAD-binding protein involved in the addition of a carboxymethylaminomethyl (cmnm) group at the wobble position (U34) of certain tRNAs, forming tRNA-cmnm(5)s(2)U34. The chain is tRNA uridine 5-carboxymethylaminomethyl modification enzyme MnmG from Saccharophagus degradans (strain 2-40 / ATCC 43961 / DSM 17024).